The sequence spans 676 residues: ATP-dependent zinc metalloprotease FTSH 2, chloroplastic (676 aa).

The N-terminal 32 residues, 1-32, are a transit peptide targeting the chloroplast; that stretch reads MAPTSMSLAAKTPLPFSTLPSSGVAQRPVSVT. The helical transmembrane segment at 155–175 threads the bilayer; that stretch reads LLFNLIGNLAFPLILIGGLFL. 254–261 serves as a coordination point for ATP; sequence GPPGTGKT. Histidine 475 serves as a coordination point for Zn(2+). Glutamate 476 is an active-site residue. The Zn(2+) site is built by histidine 479 and aspartate 553.

In the N-terminal section; belongs to the AAA ATPase family. It in the C-terminal section; belongs to the peptidase M41 family. Requires Zn(2+) as cofactor.

It localises to the plastid. The protein resides in the chloroplast thylakoid membrane. Functionally, probable ATP-dependent zinc metallopeptidase. This Oryza sativa subsp. japonica (Rice) protein is ATP-dependent zinc metalloprotease FTSH 2, chloroplastic (FTSH2).